We begin with the raw amino-acid sequence, 361 residues long: Ribosomal RNA large subunit methyltransferase M (361 aa).

S-adenosyl-L-methionine-binding positions include S187, 220-223, D239, D259, and D276; that span reads CPGG. K305 (proton acceptor) is an active-site residue.

It belongs to the class I-like SAM-binding methyltransferase superfamily. RNA methyltransferase RlmE family. RlmM subfamily. In terms of assembly, monomer.

It localises to the cytoplasm. It carries out the reaction cytidine(2498) in 23S rRNA + S-adenosyl-L-methionine = 2'-O-methylcytidine(2498) in 23S rRNA + S-adenosyl-L-homocysteine + H(+). Catalyzes the 2'-O-methylation at nucleotide C2498 in 23S rRNA. This is Ribosomal RNA large subunit methyltransferase M from Shewanella sp. (strain MR-4).